The following is a 522-amino-acid chain: ATP synthase subunit alpha, mitochondrial (522 aa).

Gly-172–Thr-179 contributes to the ATP binding site.

Belongs to the ATPase alpha/beta chains family. F-type ATPases have 2 components, CF(1) - the catalytic core - and CF(0) - the membrane proton channel. CF(1) has five subunits: alpha(3), beta(3), gamma(1), delta(1), epsilon(1). CF(0) has three main subunits: a, b and c.

The protein localises to the mitochondrion. Its subcellular location is the mitochondrion inner membrane. In terms of biological role, mitochondrial membrane ATP synthase (F(1)F(0) ATP synthase or Complex V) produces ATP from ADP in the presence of a proton gradient across the membrane which is generated by electron transport complexes of the respiratory chain. F-type ATPases consist of two structural domains, F(1) - containing the extramembraneous catalytic core, and F(0) - containing the membrane proton channel, linked together by a central stalk and a peripheral stalk. During catalysis, ATP synthesis in the catalytic domain of F(1) is coupled via a rotary mechanism of the central stalk subunits to proton translocation. Subunits alpha and beta form the catalytic core in F(1). Rotation of the central stalk against the surrounding alpha(3)beta(3) subunits leads to hydrolysis of ATP in three separate catalytic sites on the beta subunits. Subunit alpha does not bear the catalytic high-affinity ATP-binding sites. This Acanthamoeba castellanii (Amoeba) protein is ATP synthase subunit alpha, mitochondrial (ATP1).